The following is a 495-amino-acid chain: ESX-2 secretion system ATPase EccB2 (495 aa).

The chain crosses the membrane as a helical span at residues 43-63; it reads LALSMVLVAIAAGWMMLLNVL.

This sequence belongs to the EccB family. In terms of assembly, part of the ESX-2 / type VII secretion system (T7SS), which is composed of cytosolic and membrane components.

The protein localises to the cell membrane. An ATPase. The polypeptide is ESX-2 secretion system ATPase EccB2 (eccB2) (Mycobacterium tuberculosis (strain CDC 1551 / Oshkosh)).